The sequence spans 116 residues: Venom protein 54.1 (116 aa).

The signal sequence occupies residues 1 to 19 (MNFQVFSLIFFNFVYYCSC).

In terms of processing, contains 3 disulfide bonds. In terms of tissue distribution, expressed by the venom gland.

It is found in the secreted. This chain is Venom protein 54.1, found in Lychas mucronatus (Chinese swimming scorpion).